A 338-amino-acid polypeptide reads, in one-letter code: Lipoate-protein ligase A (338 aa).

The region spanning 29 to 216 (PATQRVLFLW…AFFAHYGERV (188 aa)) is the BPL/LPL catalytic domain. ATP is bound by residues Arg71, 76 to 79 (GAVF), and Lys134. Lys134 contributes to the (R)-lipoate binding site.

Belongs to the LplA family. Monomer.

Its subcellular location is the cytoplasm. It catalyses the reaction L-lysyl-[lipoyl-carrier protein] + (R)-lipoate + ATP = N(6)-[(R)-lipoyl]-L-lysyl-[lipoyl-carrier protein] + AMP + diphosphate + H(+). Its pathway is protein modification; protein lipoylation via exogenous pathway; protein N(6)-(lipoyl)lysine from lipoate: step 1/2. The protein operates within protein modification; protein lipoylation via exogenous pathway; protein N(6)-(lipoyl)lysine from lipoate: step 2/2. Catalyzes both the ATP-dependent activation of exogenously supplied lipoate to lipoyl-AMP and the transfer of the activated lipoyl onto the lipoyl domains of lipoate-dependent enzymes. The polypeptide is Lipoate-protein ligase A (Shigella dysenteriae serotype 1 (strain Sd197)).